The sequence spans 244 residues: Ribosomal RNA small subunit methyltransferase NEP1 (244 aa).

A disordered region spans residues 1–33 (MSAASGGFQPRERRFSVQEQDWETTPPKKLRLG). Residues Ser5 and Ser16 each carry the phosphoserine modification. S-adenosyl-L-methionine contacts are provided by residues Thr176, Gly201, Gly206, and 219-224 (ISNYPL).

This sequence belongs to the class IV-like SAM-binding methyltransferase superfamily. RNA methyltransferase NEP1 family. As to quaternary structure, homodimer. Part of the small subunit (SSU) processome, composed of more than 70 proteins and the RNA chaperone small nucleolar RNA (snoRNA) U3.

It localises to the nucleus. Its subcellular location is the nucleolus. The enzyme catalyses pseudouridine(1248) in human 18S rRNA + S-adenosyl-L-methionine = N(1)-methylpseudouridine(1248) in human 18S rRNA + S-adenosyl-L-homocysteine + H(+). Its function is as follows. S-adenosyl-L-methionine-dependent pseudouridine N(1)-methyltransferase that methylates pseudouridine at position in 18S rRNA. Involved the biosynthesis of the hypermodified N1-methyl-N3-(3-amino-3-carboxypropyl) pseudouridine (m1acp3-Psi) conserved in eukaryotic 18S rRNA. Is not able to methylate uridine at this position. Also has an essential role in 40S ribosomal subunit biogenesis independent on its methyltransferase activity, facilitating the incorporation of ribosomal protein S19 during the formation of pre-ribosomes. Part of the small subunit (SSU) processome, first precursor of the small eukaryotic ribosomal subunit. During the assembly of the SSU processome in the nucleolus, many ribosome biogenesis factors, an RNA chaperone and ribosomal proteins associate with the nascent pre-rRNA and work in concert to generate RNA folding, modifications, rearrangements and cleavage as well as targeted degradation of pre-ribosomal RNA by the RNA exosome. The polypeptide is Ribosomal RNA small subunit methyltransferase NEP1 (Mus musculus (Mouse)).